Here is a 574-residue protein sequence, read N- to C-terminus: Arginine--tRNA ligase (574 aa).

A 'HIGH' region motif is present at residues 121 to 131 (PNIAKEMHIGH).

It belongs to the class-I aminoacyl-tRNA synthetase family. Monomer.

It localises to the cytoplasm. The enzyme catalyses tRNA(Arg) + L-arginine + ATP = L-arginyl-tRNA(Arg) + AMP + diphosphate. The polypeptide is Arginine--tRNA ligase (Buchnera aphidicola subsp. Acyrthosiphon pisum (strain 5A)).